Here is a 323-residue protein sequence, read N- to C-terminus: Aspartate carbamoyltransferase catalytic subunit (323 aa).

Residues Arg-71 and Thr-72 each contribute to the carbamoyl phosphate site. Lys-99 contacts L-aspartate. Positions 121, 151, and 154 each coordinate carbamoyl phosphate. L-aspartate contacts are provided by Arg-184 and Arg-239. 2 residues coordinate carbamoyl phosphate: Gly-280 and Pro-281.

This sequence belongs to the aspartate/ornithine carbamoyltransferase superfamily. ATCase family. As to quaternary structure, heterododecamer (2C3:3R2) of six catalytic PyrB chains organized as two trimers (C3), and six regulatory PyrI chains organized as three dimers (R2).

The enzyme catalyses carbamoyl phosphate + L-aspartate = N-carbamoyl-L-aspartate + phosphate + H(+). Its pathway is pyrimidine metabolism; UMP biosynthesis via de novo pathway; (S)-dihydroorotate from bicarbonate: step 2/3. In terms of biological role, catalyzes the condensation of carbamoyl phosphate and aspartate to form carbamoyl aspartate and inorganic phosphate, the committed step in the de novo pyrimidine nucleotide biosynthesis pathway. The chain is Aspartate carbamoyltransferase catalytic subunit from Ralstonia pickettii (strain 12J).